The primary structure comprises 103 residues: UPF0145 protein HH_1800 (103 aa).

This sequence belongs to the UPF0145 family.

This is UPF0145 protein HH_1800 from Helicobacter hepaticus (strain ATCC 51449 / 3B1).